The primary structure comprises 495 residues: MAKNNAVAGFNALNGVELNLFTTDELKAIHYATMEVLMDPGIQVSDPEARQIFKENGCEVNEKTNVVKIPEYLVRKALQLAPSRFVLWGRDKKFNTVQECGGKVHWTCFGTGVKVCKYQDGKYVTVDSVEKDIADIAKLCDWAENIDYFSLPVSARDIAGQGAQDVHETLTPLANTAKHFHHIDPVGENVEYYRDIVKAYYGGDEEEARKKPIFSMLLCPTSPLELSVNACQVIIKGARFGIPVNVLSMAMSGGSSPVYLAGTLVTHNAEVLSGIVLAQLTVPGAKVWYGSSTTTFDLKKGTAPVGSPELGLISAAVAKLAQFYGLPSYVAGSOSDAKVPDDQAGHEKTMTTLLPALAGANTIYGAGMLELGMTFSMEQLVIDNDIFSMVKKAMQGIPVSEETLAVESIQKVGIGNNFLALKQTRQLVDYPSNPMLLDRHMFGDWAAAGSKDLATVAHEKVEDVLKNHQVTPIDADIFKDMQAIVDKADKAFRGM.

Pyl334 is a non-standard amino acid (pyrrolysine).

Belongs to the trimethylamine methyltransferase family. Can form a complex with MttC.

It carries out the reaction Co(I)-[trimethylamine-specific corrinoid protein] + trimethylamine + H(+) = methyl-Co(III)-[trimethylamine-specific corrinoid protein] + dimethylamine. Its pathway is one-carbon metabolism; methanogenesis from trimethylamine. Its function is as follows. Catalyzes the transfer of a methyl group from trimethylamine to the corrinoid cofactor of MttC. The polypeptide is Trimethylamine methyltransferase MttB (Methanosarcina barkeri).